The primary structure comprises 910 residues: Harmonin (910 aa).

The N-terminal domain stretch occupies residues Met-1–Lys-86. 2 PDZ domains span residues Glu-87–Pro-171 and Lys-211–Glu-295. The mediates interaction with MYO7B stretch occupies residues Gly-194–Ile-833. Ser-219 is modified (phosphoserine). 2 coiled-coil regions span residues Thr-299–Asp-377 and Thr-417–Glu-482. The tract at residues Val-563 to Ile-688 is disordered. Residues Met-564 to Leu-582 are compositionally biased toward pro residues. Residues Pro-583 to Val-596 show a composition bias toward low complexity. Residues Thr-599–Ile-611 show a composition bias toward pro residues. Residues Asn-650 to Arg-664 are compositionally biased toward polar residues. One can recognise a PDZ 3 domain in the interval Asp-752–Val-839. The interval Lys-890–Pro-910 is disordered. Over residues Pro-899 to Pro-910 the composition is skewed to low complexity.

Part of the IMAC/intermicrovillar adhesion complex/intermicrovillar tip-link complex composed of ANKS4B, MYO7B, USH1C, CDHR2 and CDHR5. Part of a complex composed of USH1C, USH1G and MYO7A. Interacts with F-actin. Interacts with USH2A. Interacts with SLC4A7. Interacts (via PDZ1 domain) with the C-terminus of USHBP1. Interacts (via N-terminus and PDZ 2 domain) with CDH23. Interacts with USH1G. Interacts with MYO7B. Interacts with CDHR2 and CDHR5; may mediate their interaction with MYO7B at the microvilli tip. Interacts (via PDZ 1 domain) with ANKS4B. Interacts (via PDZ 1 domain) with DOCK4. Detected in stereocilia of cochlear hair cells (at protein level). Isoform 1 is expressed in the eye, cochlea, vestibule, heart, kidney, small intestine and testis; it is barely visible in skeletal muscle, liver, and lung and is absent from the brain. Isoforms 2 and 3 are expressed in the cochlea and vestibule.

It is found in the cytoplasm. Its subcellular location is the cytosol. The protein localises to the cytoskeleton. It localises to the cell projection. The protein resides in the microvillus. Functionally, anchoring/scaffolding protein that is a part of the functional network formed by USH1C, USH1G, CDH23 and MYO7A that mediates mechanotransduction in cochlear hair cells. Required for normal development and maintenance of cochlear hair cell bundles. As part of the intermicrovillar adhesion complex/IMAC plays a role in brush border differentiation, controlling microvilli organization and length. Probably plays a central regulatory role in the assembly of the complex, recruiting CDHR2, CDHR5 and MYO7B to the microvilli tips. The sequence is that of Harmonin (Ush1c) from Mus musculus (Mouse).